The sequence spans 132 residues: Small ribosomal subunit protein uS8 (132 aa).

Belongs to the universal ribosomal protein uS8 family. In terms of assembly, part of the 30S ribosomal subunit. Contacts proteins S5 and S12.

Functionally, one of the primary rRNA binding proteins, it binds directly to 16S rRNA central domain where it helps coordinate assembly of the platform of the 30S subunit. This is Small ribosomal subunit protein uS8 from Mycoplasmopsis pulmonis (strain UAB CTIP) (Mycoplasma pulmonis).